A 160-amino-acid polypeptide reads, in one-letter code: Large ribosomal subunit protein uL30m (160 aa).

Residues 1–34 constitute a mitochondrion transit peptide; it reads MAGVLRSAFPRPPCRLQTVKKGAESLIGTEWIRH. Positions 44–64 are disordered; the sequence is KVFQPKPEDHEKYGGDPQNPH.

This sequence belongs to the universal ribosomal protein uL30 family. Component of the mitochondrial ribosome large subunit (39S) which comprises a 16S rRNA and about 50 distinct proteins.

Its subcellular location is the mitochondrion. The protein is Large ribosomal subunit protein uL30m (Mrpl30) of Mus musculus (Mouse).